The following is a 249-amino-acid chain: Octanoyltransferase (249 aa).

The BPL/LPL catalytic domain maps to 53 to 234; the sequence is PDTDDEIWVV…RLIAHLDGAT (182 aa). Residues 93-100, 165-167, and 178-180 each bind substrate; these read RGGQITYH, ALG, and GLS. Cys-196 serves as the catalytic Acyl-thioester intermediate.

The protein belongs to the LipB family.

Its subcellular location is the cytoplasm. It catalyses the reaction octanoyl-[ACP] + L-lysyl-[protein] = N(6)-octanoyl-L-lysyl-[protein] + holo-[ACP] + H(+). It functions in the pathway protein modification; protein lipoylation via endogenous pathway; protein N(6)-(lipoyl)lysine from octanoyl-[acyl-carrier-protein]: step 1/2. Functionally, catalyzes the transfer of endogenously produced octanoic acid from octanoyl-acyl-carrier-protein onto the lipoyl domains of lipoate-dependent enzymes. Lipoyl-ACP can also act as a substrate although octanoyl-ACP is likely to be the physiological substrate. The chain is Octanoyltransferase from Burkholderia mallei (strain NCTC 10247).